The chain runs to 113 residues: Large ribosomal subunit protein uL22 (113 aa).

This sequence belongs to the universal ribosomal protein uL22 family. As to quaternary structure, part of the 50S ribosomal subunit.

This protein binds specifically to 23S rRNA; its binding is stimulated by other ribosomal proteins, e.g. L4, L17, and L20. It is important during the early stages of 50S assembly. It makes multiple contacts with different domains of the 23S rRNA in the assembled 50S subunit and ribosome. Functionally, the globular domain of the protein is located near the polypeptide exit tunnel on the outside of the subunit, while an extended beta-hairpin is found that lines the wall of the exit tunnel in the center of the 70S ribosome. The sequence is that of Large ribosomal subunit protein uL22 from Geobacillus thermodenitrificans (strain NG80-2).